Consider the following 171-residue polypeptide: Probable DNA-directed RNA polymerase subunit delta (171 aa).

The HTH HARE-type domain occupies 14–81 (MALVEIAYEI…SDQTWGLRSW (68 aa)). The disordered stretch occupies residues 138 to 171 (EFDEIDEADDDELDDLEDEILDDDEDFDEEEDEE).

The protein belongs to the RpoE family. In terms of assembly, RNAP is composed of a core of 2 alpha, a beta and a beta' subunits. The core is associated with a delta subunit and one of several sigma factors.

Participates in both the initiation and recycling phases of transcription. In the presence of the delta subunit, RNAP displays an increased specificity of transcription, a decreased affinity for nucleic acids, and an increased efficiency of RNA synthesis because of enhanced recycling. This Bacillus licheniformis (strain ATCC 14580 / DSM 13 / JCM 2505 / CCUG 7422 / NBRC 12200 / NCIMB 9375 / NCTC 10341 / NRRL NRS-1264 / Gibson 46) protein is Probable DNA-directed RNA polymerase subunit delta.